The sequence spans 156 residues: ATP synthase subunit b (156 aa).

The helical transmembrane segment at Ile3–Thr23 threads the bilayer.

This sequence belongs to the ATPase B chain family. F-type ATPases have 2 components, F(1) - the catalytic core - and F(0) - the membrane proton channel. F(1) has five subunits: alpha(3), beta(3), gamma(1), delta(1), epsilon(1). F(0) has three main subunits: a(1), b(2) and c(10-14). The alpha and beta chains form an alternating ring which encloses part of the gamma chain. F(1) is attached to F(0) by a central stalk formed by the gamma and epsilon chains, while a peripheral stalk is formed by the delta and b chains.

The protein resides in the cell inner membrane. Functionally, f(1)F(0) ATP synthase produces ATP from ADP in the presence of a proton or sodium gradient. F-type ATPases consist of two structural domains, F(1) containing the extramembraneous catalytic core and F(0) containing the membrane proton channel, linked together by a central stalk and a peripheral stalk. During catalysis, ATP synthesis in the catalytic domain of F(1) is coupled via a rotary mechanism of the central stalk subunits to proton translocation. Its function is as follows. Component of the F(0) channel, it forms part of the peripheral stalk, linking F(1) to F(0). The polypeptide is ATP synthase subunit b (Xanthomonas axonopodis pv. citri (strain 306)).